We begin with the raw amino-acid sequence, 422 residues long: Ornithine decarboxylase (422 aa).

Lys71 carries the N6-(pyridoxal phosphate)lysine modification. Residues Ser203, Gly240, and 275–278 (EPGR) contribute to the pyridoxal 5'-phosphate site. 331–332 (FD) is a binding site for substrate. Cys359 functions as the Proton donor; shared with dimeric partner in the catalytic mechanism. Asp360 is a substrate binding site. Tyr388 is a binding site for pyridoxal 5'-phosphate.

Belongs to the Orn/Lys/Arg decarboxylase class-II family. Homodimer. Only the dimer is catalytically active, as the active sites are constructed of residues from both monomers. The cofactor is pyridoxal 5'-phosphate.

The enzyme catalyses L-ornithine + H(+) = putrescine + CO2. It functions in the pathway amine and polyamine biosynthesis; putrescine biosynthesis via L-ornithine pathway; putrescine from L-ornithine: step 1/1. With respect to regulation, inhibited by antizyme (AZ) in response to polyamine levels. AZ inhibits the assembly of the functional homodimer by binding to ODC monomers and targeting them for ubiquitin-independent proteolytic destruction by the 26S proteasome. Its function is as follows. Catalyzes the first and rate-limiting step of polyamine biosynthesis that converts ornithine into putrescine, which is the precursor for the polyamines, spermidine and spermine. Polyamines are essential for cell proliferation and are implicated in cellular processes, ranging from DNA replication to apoptosis. The polypeptide is Ornithine decarboxylase (Caenorhabditis elegans).